The chain runs to 208 residues: Ubiquitin-conjugating enzyme E2 S (208 aa).

The 147-residue stretch at 14-160 (QTIRQVMREL…ARMMTEIHAQ (147 aa)) folds into the UBC core domain. Cys-98 functions as the Glycyl thioester intermediate in the catalytic mechanism. The interval 159–208 (AQPAKCASTTSDAKDDDGPSTKKHAGLDKKLQDKKKEKLLKEKKRMLKRL) is disordered. Positions 170–198 (DAKDDDGPSTKKHAGLDKKLQDKKKEKLL) are enriched in basic and acidic residues. Over residues 199-208 (KEKKRMLKRL) the composition is skewed to basic residues.

This sequence belongs to the ubiquitin-conjugating enzyme family.

It carries out the reaction S-ubiquitinyl-[E1 ubiquitin-activating enzyme]-L-cysteine + [E2 ubiquitin-conjugating enzyme]-L-cysteine = [E1 ubiquitin-activating enzyme]-L-cysteine + S-ubiquitinyl-[E2 ubiquitin-conjugating enzyme]-L-cysteine.. It participates in protein modification; protein ubiquitination. Functionally, catalyzes the covalent attachment of ubiquitin to other proteins. Acts as an essential factor of the anaphase promoting complex/cyclosome (APC/C), a cell cycle-regulated ubiquitin ligase that controls progression through mitosis. Acts by specifically elongating polyubiquitin chains initiated by the E2 enzyme vih/UbcH10 on APC/C substrates, enhancing the degradation of APC/C substrates by the proteasome and promoting mitotic exit. This is Ubiquitin-conjugating enzyme E2 S from Drosophila willistoni (Fruit fly).